We begin with the raw amino-acid sequence, 192 residues long: MKVILASKSPRRVEILEKIVKEFEVVQSNFDENTIDFKGDIEKYVKDLSRNKAIEVSKRLNEPSIVIAADTVVFQNGKVLEKPKNEEDAFSMLSSLSGNTHKVYSGICLINTYDDTVVTDCDCTEVRFSELNPRQIRNYINSGEPMDKAGAYGIQGLGGAFVEGIKGCYYNVMGLPLNKLYKALENYDITIL.

Asp70 acts as the Proton acceptor in catalysis.

This sequence belongs to the Maf family. YhdE subfamily. The cofactor is a divalent metal cation.

The protein localises to the cytoplasm. The catalysed reaction is dTTP + H2O = dTMP + diphosphate + H(+). The enzyme catalyses UTP + H2O = UMP + diphosphate + H(+). In terms of biological role, nucleoside triphosphate pyrophosphatase that hydrolyzes dTTP and UTP. May have a dual role in cell division arrest and in preventing the incorporation of modified nucleotides into cellular nucleic acids. This is dTTP/UTP pyrophosphatase from Clostridium perfringens (strain ATCC 13124 / DSM 756 / JCM 1290 / NCIMB 6125 / NCTC 8237 / Type A).